The chain runs to 553 residues: 5'-nucleotidase (553 aa).

Residues 1–21 (MKQRLIVKTALSAAILATLAG) form the signal peptide. C22 is lipidated: N-palmitoyl cysteine. C22 carries S-diacylglycerol cysteine lipidation. A divalent metal cation-binding residues include D45, H47, D88, N120, H221, H256, and Q258. Substrate-binding positions include F432 and 501 to 507 (YNAAGGD).

This sequence belongs to the 5'-nucleotidase family. Chloride serves as cofactor. Mg(2+) is required as a cofactor.

It localises to the cell outer membrane. The enzyme catalyses a ribonucleoside 5'-phosphate + H2O = a ribonucleoside + phosphate. Degradation of extracellular 5'-nucleotides for nutritional needs. In Vibrio vulnificus (strain CMCP6), this protein is 5'-nucleotidase (nutA).